A 326-amino-acid polypeptide reads, in one-letter code: tRNA-modifying protein YgfZ (326 aa).

Folate-binding residues include Trp27 and Trp189.

Belongs to the tRNA-modifying YgfZ family.

It localises to the cytoplasm. Folate-binding protein involved in regulating the level of ATP-DnaA and in the modification of some tRNAs. It is probably a key factor in regulatory networks that act via tRNA modification, such as initiation of chromosomal replication. The polypeptide is tRNA-modifying protein YgfZ (Escherichia coli O127:H6 (strain E2348/69 / EPEC)).